The chain runs to 209 residues: Thymidine kinase (209 aa).

Residues G16–T23 and D90–Q93 contribute to the ATP site. The Proton acceptor role is filled by E91.

It belongs to the thymidine kinase family. As to quaternary structure, homotetramer.

Its subcellular location is the cytoplasm. It carries out the reaction thymidine + ATP = dTMP + ADP + H(+). The sequence is that of Thymidine kinase from Onion yellows phytoplasma (strain OY-M).